The sequence spans 1215 residues: von Willebrand factor A domain-containing protein 5B1 (1215 aa).

Positions Met1–Ser18 are cleaved as a signal peptide. In terms of domain architecture, VIT spans Asp19 to Ser141. Asn132 carries an N-linked (GlcNAc...) asparagine glycan. Positions Glu353 to Val532 constitute a VWFA domain. The interval Ser595–Pro674 is disordered. Composition is skewed to polar residues over residues Gly608–Thr621 and Tyr646–Thr667. Position 879 is a phosphotyrosine (Tyr879). 3 disordered regions span residues Gly934–Ala953, Gln964–Ser999, and Ser1100–Ser1121. 3 stretches are compositionally biased toward polar residues: residues Gln964–Pro975, Gln990–Ser999, and Ser1100–Pro1112.

The protein resides in the secreted. In Mus musculus (Mouse), this protein is von Willebrand factor A domain-containing protein 5B1 (Vwa5b1).